Here is a 476-residue protein sequence, read N- to C-terminus: FAD-dependent monooxygenase ausM (476 aa).

Residues glutamate 41, glycine 55, and arginine 114 each contribute to the FAD site. Residue tyrosine 222 is part of the active site. Aspartate 314 and alanine 327 together coordinate FAD. The chain crosses the membrane as a helical span at residues 447–467; the sequence is LGSTPIHMLTLLLPCLFYFMY.

Belongs to the paxM FAD-dependent monooxygenase family. FAD serves as cofactor.

The protein localises to the membrane. The protein operates within secondary metabolite biosynthesis; terpenoid biosynthesis. Functionally, FAD-dependent monooxygenase; part of the gene cluster A that mediates the biosynthesis of the fungal meroterpenoid acetoxydehydroaustin. The first step of the pathway is the synthesis of 3,5-dimethylorsellinic acid by the polyketide synthase ausA. 3,5-dimethylorsellinic acid is then prenylated by the polyprenyl transferase ausN. Further epoxidation by the FAD-dependent monooxygenase ausM and cyclization by the probable terpene cyclase ausL lead to the formation of protoaustinoid A. Protoaustinoid A is then oxidized to spiro-lactone preaustinoid A3 by the combined action of the FAD-binding monooxygenases ausB and ausC, and the dioxygenase ausE. Acid-catalyzed keto-rearrangement and ring contraction of the tetraketide portion of preaustinoid A3 by ausJ lead to the formation of preaustinoid A4. The aldo-keto reductase ausK, with the help of ausH, is involved in the next step by transforming preaustinoid A4 into isoaustinone which is in turn hydroxylated by the P450 monooxygenase ausI to form austinolide. The cytochrome P450 monooxygenase ausG then modifies austinolide to austinol. Austinol is further acetylated to austin by the O-acetyltransferase ausP, which spontaneously changes to dehydroaustin. The cytochrome P450 monooxygenase then converts dehydroaustin is into 7-dehydrodehydroaustin. The hydroxylation catalyzed by ausR permits the second O-acetyltransferase ausQ to add an additional acetyl group to the molecule, leading to the formation of acetoxydehydroaustin. Due to genetic rearrangements of the clusters and the subsequent loss of some enzymes, the end product of the Penicillium brasilianum austinoid biosynthesis clusters is acetoxydehydroaustin. The sequence is that of FAD-dependent monooxygenase ausM from Penicillium brasilianum.